We begin with the raw amino-acid sequence, 169 residues long: Cell division inhibitor SulA (169 aa).

Residues 1–22 (MHTSIYANRSTSFSPSAGNDTQ) are disordered. The ftsZ binding stretch occupies residues 106–112 (ALRTGNY). The lon protease binding stretch occupies residues 162-169 (KIHSNLYH).

It belongs to the SulA family. Interacts with FtsZ. Post-translationally, is rapidly cleaved and degraded by the Lon protease once DNA damage is repaired.

Its function is as follows. Component of the SOS system and an inhibitor of cell division. Accumulation of SulA causes rapid cessation of cell division and the appearance of long, non-septate filaments. In the presence of GTP, binds a polymerization-competent form of FtsZ in a 1:1 ratio, thus inhibiting FtsZ polymerization and therefore preventing it from participating in the assembly of the Z ring. This mechanism prevents the premature segregation of damaged DNA to daughter cells during cell division. The sequence is that of Cell division inhibitor SulA from Enterobacter sp. (strain 638).